A 3343-amino-acid polypeptide reads, in one-letter code: Breast cancer type 2 susceptibility protein homolog (3343 aa).

The segment at 1-40 (MTVEYKRRPTFWEIFKARCSTADLGPISLNWFEELFSEAP) is interaction with PALB2. Residues 40-60 (PPYNTEHPEESEYKPQGHEPQ) are disordered. Residues 45 to 56 (EHPEESEYKPQG) show a composition bias toward basic and acidic residues. At S70 the chain carries Phosphoserine. The segment at 348–381 (IEPRDSEPLDPSVTNQKPLYSQSGDISSEAGQCS) is disordered. The segment covering 359–381 (SVTNQKPLYSQSGDISSEAGQCS) has biased composition (polar residues). Residues S475 and S736 each carry the phosphoserine modification. The tract at residues 622–982 (PDSSIKRSNL…DKWSEFLDPL (361 aa)) is interaction with NPM1. BRCA2 repeat units follow at residues 984–1018 (NHKL…DIEE), 1197–1231 (KEME…DIEN), 1405–1439 (MKEF…QETE), 1503–1537 (KEPT…ETQY), 1645–1669 (CYTG…WLRE), 1828–1845 (FITT…IFTD), 1939–1973 (PSRT…EIDG), and 2019–2053 (SSFV…EFDL). An interaction with RAD51 region spans residues 985-2050 (HKLGGSFRTA…LHKVKGMLEE (1066 aa)). Disordered stretches follow at residues 2059-2138 (TLQH…VLGT), 2297-2356 (PFCS…SDKS), and 2377-2407 (DSKN…PQFN). A Phosphoserine modification is found at S2063. Polar residues-rich tracts occupy residues 2083–2094 (PEYSVSSKLQKT) and 2101–2125 (SPSN…QLSQ). An interaction with HSF2BP region spans residues 2233–2300 (RKRGGMAGVA…EPVTCGPFCS (68 aa)). 2 stretches are compositionally biased toward polar residues: residues 2307–2320 (TQSP…QGLQ) and 2332–2342 (GKSSSNPTVSA). Residues 2313 to 2475 (TSPAQGLQSK…SPKQLYMYGV (163 aa)) are interaction with FANCD2. Over residues 2344 to 2356 (RSERTRHSVSDKS) the composition is skewed to basic and acidic residues. An interaction with SEM1 region spans residues 2411 to 2762 (MSSLQNARDL…QRVYPLQWVE (352 aa)). Residues 2612–2628 (AAKTLVLCVSDIISLST) carry the Nuclear export signal; masked by interaction with SEM1 motif. Residues 3114 to 3163 (DSPKWSTPNKDPTREPYPASTCSASDLASGGQLPRSSPTDQQSYRSPLSC) form a disordered region. Residues 3147–3163 (PRSSPTDQQSYRSPLSC) are compositionally biased toward polar residues. S3222 carries the post-translational modification Phosphoserine; by CDK1 and CDK2. Disordered regions lie at residues 3231-3255 (PPRS…WSRA) and 3289-3343 (VGGS…PDYS). Phosphoserine is present on S3250. A compositionally biased stretch (polar residues) spans 3295–3310 (VFPSDSTRTEGPSAST). The span at 3318–3334 (SKRESLRDCRDDSDGKL) shows a compositional bias: basic and acidic residues.

In terms of assembly, monomer and dimer. Interacts with RAD51; regulates RAD51 recruitment and function at sites of DNA repair. Interacts with SEM1, WDR16, USP11, DMC1, ROCK2 and NPM1. Interacts with both nonubiquitinated and monoubiquitinated FANCD2; this complex also includes XRCC3 and phosphorylated FANCG. Part of a BRCA complex containing BRCA1, BRCA2 and PALB2. Component of the homologous recombination repair (HR) complex composed of ERCC5/XPG, BRCA2, PALB2, DSS1 and RAD51. Within the complex, interacts with ERCC5/XPG and PALB2. Interacts directly with PALB2 which may serve as a scaffold for a HR complex containing PALB2, BRCA2, RAD51C, RAD51 and XRCC3. Interacts with BRCA1 only in the presence of PALB2 which serves as the bridging protein. Interacts with POLH; the interaction is direct. Interacts with the TREX-2 complex subunits PCID2 and SEM1. Interacts with HSF2BP and BRME1; the interaction with HSF2BP is direct and allows the formation of a ternary complex. The complex BRME1:HSF2BP:BRCA2 interacts with SPATA22, MEIOB and RAD51. Post-translationally, phosphorylated by ATM upon irradiation-induced DNA damage. Phosphorylation by CHEK1 and CHEK2 regulates interaction with RAD51. Phosphorylation at Ser-3222 by CDK1 and CDK2 is low in S phase when recombination is active, but increases as cells progress towards mitosis; this phosphorylation prevents homologous recombination-dependent repair during S phase and G2 by inhibiting RAD51 binding. In terms of processing, ubiquitinated in the absence of DNA damage; this does not lead to proteasomal degradation. In contrast, ubiquitination in response to DNA damage leads to proteasomal degradation. As to expression, highest expression in testis. Also expressed in spleen, skeletal muscle, thymus, mammary gland, heart, ovary, prostate, liver, lung, kidney and brain.

It localises to the nucleus. The protein localises to the cytoplasm. It is found in the cytoskeleton. The protein resides in the microtubule organizing center. Its subcellular location is the centrosome. Its function is as follows. Involved in double-strand break repair and/or homologous recombination. Binds RAD51 and potentiates recombinational DNA repair by promoting assembly of RAD51 onto single-stranded DNA (ssDNA). Acts by targeting RAD51 to ssDNA over double-stranded DNA, enabling RAD51 to displace replication protein-A (RPA) from ssDNA and stabilizing RAD51-ssDNA filaments by blocking ATP hydrolysis. Part of a PALB2-scaffolded HR complex containing RAD51C and which is thought to play a role in DNA repair by HR. May participate in S phase checkpoint activation. Binds selectively to ssDNA, and to ssDNA in tailed duplexes and replication fork structures. May play a role in the extension step after strand invasion at replication-dependent DNA double-strand breaks; together with PALB2 is involved in both POLH localization at collapsed replication forks and DNA polymerization activity. In concert with NPM1, regulates centrosome duplication. Interacts with the TREX-2 complex (transcription and export complex 2) subunits PCID2 and SEM1, and is required to prevent R-loop-associated DNA damage and thus transcription-associated genomic instability, independently of its known role in homologous recombination. The polypeptide is Breast cancer type 2 susceptibility protein homolog (Rattus norvegicus (Rat)).